Reading from the N-terminus, the 985-residue chain is DNA polymerase (985 aa).

Positions 936 to 972 (APSASDASGKRARKGAAPSDDESGSSEDEDAPCEPKC) are disordered. Residues 954 to 967 (SDDESGSSEDEDAP) are compositionally biased toward acidic residues.

It belongs to the DNA polymerase type-B family.

It carries out the reaction DNA(n) + a 2'-deoxyribonucleoside 5'-triphosphate = DNA(n+1) + diphosphate. Functionally, replicates the viral genome, host DNA polymerases cannot substitute for the viral enzyme in this process. In Orgyia pseudotsugata (Douglas-fir tussock moth), this protein is DNA polymerase (POL).